The primary structure comprises 238 residues: IkB-like protein (238 aa).

ANK repeat units lie at residues 47–76, 86–119, 123–152, and 157–186; these read NGSS…YPGE, DGNS…RICL, NGIT…DPTQ, and RGFT…KPLY. A Nuclear localization signal motif is present at residues 80–86; sequence PHRRDKD. Residues 202–213 carry the Nuclear localization signal motif; it reads KKKPKIIITGCK. A PxIxITxC motif; Interaction with host PPP3CA motif is present at residues 205–212; it reads PKIIITGC. Positions 227-230 match the FLCV motif motif; sequence FLCV.

It belongs to the asfivirus A238L family. Interacts with host PPIA. Interacts with host PPP3CA/Calcineurin. Interacts with host RELA/p65; interaction of the 32 kDa form with host RELA results in the formation of a stable complex with NF-kappa-B. Interacts with host PPP3R1. Interacts with host EP300; this interaction inhibits the association of host EP300 with host RELA, JUN and NFATC2. Post-translationally, the protein exists in a 28 kDa and a 32 kDa form, probably due to post-translational modifications which are neither phosphorylation, nor sumoylation.

The protein localises to the host nucleus. It localises to the host cytoplasm. Its function is as follows. IkB-like protein that inhibits the binding of NF-kappa-B to DNA, thereby downregulating pro-inflammatory cytokine production. Forms a heterodimer with the NF-kappa-B subunit RELA/p65 and prevents the activation of the NF-kappa-B transcription factor. Inhibits calcineurin function, which is required for the induction of nuclear factor of activated T cells (NFAT)-dependent immune response genes. Prevents the binding of substrates to calcineurin without affecting the phosphatase activity. Does not contain the serine residues that are phosphorylated by host IkB kinase and thus is not degraded following stimulation of the NFkB pathway. In African swine fever virus (isolate Warthog/Namibia/Wart80/1980) (ASFV), this protein is IkB-like protein (A238L).